A 952-amino-acid polypeptide reads, in one-letter code: Translation initiation factor IF-2 (952 aa).

Disordered regions lie at residues 74–95, 153–204, 230–256, and 273–319; these read QRRL…RQLK, AAQA…KEEP, MHSP…EQAD, and DEKG…DVND. The span at 153-168 shows a compositional bias: low complexity; sequence AAQADQTDQTDQTDQA. A compositionally biased stretch (basic and acidic residues) spans 232–242; sequence SPFDRSSEAER. The span at 286-303 shows a compositional bias: low complexity; that stretch reads PGETNAATPAGTASTAGA. Residues 449 to 619 enclose the tr-type G domain; that stretch reads IRPPVITIMG…LAEAEIRELK (171 aa). The G1 stretch occupies residues 458–465; sequence GHVDHGKT. 458-465 lines the GTP pocket; that stretch reads GHVDHGKT. Residues 483–487 are G2; that stretch reads GITQH. A G3 region spans residues 505 to 508; sequence DTPG. GTP-binding positions include 505–509 and 559–562; these read DTPGH and NKVD. Residues 559–562 form a G4 region; that stretch reads NKVD. The tract at residues 595-597 is G5; it reads SAK.

It belongs to the TRAFAC class translation factor GTPase superfamily. Classic translation factor GTPase family. IF-2 subfamily.

Its subcellular location is the cytoplasm. Its function is as follows. One of the essential components for the initiation of protein synthesis. Protects formylmethionyl-tRNA from spontaneous hydrolysis and promotes its binding to the 30S ribosomal subunits. Also involved in the hydrolysis of GTP during the formation of the 70S ribosomal complex. The chain is Translation initiation factor IF-2 from Chlorobium limicola (strain DSM 245 / NBRC 103803 / 6330).